We begin with the raw amino-acid sequence, 248 residues long: Ubiquinone/menaquinone biosynthesis C-methyltransferase UbiE (248 aa).

Positions 68 and 92 each coordinate S-adenosyl-L-methionine.

It belongs to the class I-like SAM-binding methyltransferase superfamily. MenG/UbiE family.

The enzyme catalyses a 2-demethylmenaquinol + S-adenosyl-L-methionine = a menaquinol + S-adenosyl-L-homocysteine + H(+). It catalyses the reaction a 2-methoxy-6-(all-trans-polyprenyl)benzene-1,4-diol + S-adenosyl-L-methionine = a 5-methoxy-2-methyl-3-(all-trans-polyprenyl)benzene-1,4-diol + S-adenosyl-L-homocysteine + H(+). The protein operates within quinol/quinone metabolism; menaquinone biosynthesis; menaquinol from 1,4-dihydroxy-2-naphthoate: step 2/2. It participates in cofactor biosynthesis; ubiquinone biosynthesis. In terms of biological role, methyltransferase required for the conversion of demethylmenaquinol (DMKH2) to menaquinol (MKH2) and the conversion of 2-polyprenyl-6-methoxy-1,4-benzoquinol (DDMQH2) to 2-polyprenyl-3-methyl-6-methoxy-1,4-benzoquinol (DMQH2). In Rickettsia bellii (strain OSU 85-389), this protein is Ubiquinone/menaquinone biosynthesis C-methyltransferase UbiE.